The following is a 503-amino-acid chain: Maturase K (503 aa).

It belongs to the intron maturase 2 family. MatK subfamily.

It is found in the plastid. The protein resides in the chloroplast. Functionally, usually encoded in the trnK tRNA gene intron. Probably assists in splicing its own and other chloroplast group II introns. This Syzygium anisatum (Aniseed myrtle) protein is Maturase K.